The sequence spans 131 residues: Nitrogenase-stabilizing/protective protein NifW (131 aa).

This sequence belongs to the NifW family. Homotrimer; associates with NifD.

Its function is as follows. May protect the nitrogenase Fe-Mo protein from oxidative damage. The chain is Nitrogenase-stabilizing/protective protein NifW from Frankia alni (strain DSM 45986 / CECT 9034 / ACN14a).